The following is a 163-amino-acid chain: 2-C-methyl-D-erythritol 2,4-cyclodiphosphate synthase (163 aa).

2 residues coordinate a divalent metal cation: Asp-9 and His-11. Residues 9-11 (DVH) and 36-37 (HS) each bind 4-CDP-2-C-methyl-D-erythritol 2-phosphate. His-44 contributes to the a divalent metal cation binding site. Residues 58 to 60 (DIG), 63 to 67 (FPDDD), 134 to 137 (TTSE), Phe-141, and Arg-144 contribute to the 4-CDP-2-C-methyl-D-erythritol 2-phosphate site.

This sequence belongs to the IspF family. Homotrimer. A divalent metal cation is required as a cofactor.

The enzyme catalyses 4-CDP-2-C-methyl-D-erythritol 2-phosphate = 2-C-methyl-D-erythritol 2,4-cyclic diphosphate + CMP. It participates in isoprenoid biosynthesis; isopentenyl diphosphate biosynthesis via DXP pathway; isopentenyl diphosphate from 1-deoxy-D-xylulose 5-phosphate: step 4/6. Functionally, involved in the biosynthesis of isopentenyl diphosphate (IPP) and dimethylallyl diphosphate (DMAPP), two major building blocks of isoprenoid compounds. Catalyzes the conversion of 4-diphosphocytidyl-2-C-methyl-D-erythritol 2-phosphate (CDP-ME2P) to 2-C-methyl-D-erythritol 2,4-cyclodiphosphate (ME-CPP) with a corresponding release of cytidine 5-monophosphate (CMP). This is 2-C-methyl-D-erythritol 2,4-cyclodiphosphate synthase from Halorhodospira halophila (strain DSM 244 / SL1) (Ectothiorhodospira halophila (strain DSM 244 / SL1)).